Here is a 330-residue protein sequence, read N- to C-terminus: Free fatty acid receptor 2 (330 aa).

Topologically, residues 1–8 are extracellular; it reads MTPDWHSS. Residues 9–29 form a helical membrane-spanning segment; that stretch reads LILTAYILIFLTGLPANLLAL. The Cytoplasmic segment spans residues 30–43; that stretch reads RAFMGRVRQPQPAP. The chain crosses the membrane as a helical span at residues 44–64; the sequence is VHILLLNLTLADLLLLLLLPF. The Extracellular portion of the chain corresponds to 65–79; sequence RIVEAASNFRWYLPK. The chain crosses the membrane as a helical span at residues 80-100; the sequence is IVCALTGFGFYSSIYCSTWLL. The Cytoplasmic portion of the chain corresponds to 101–126; sequence AGISMERYLGVAFPVQYKLSRRPLYG. The helical transmembrane segment at 127 to 147 threads the bilayer; it reads VIAALVAWIMSFGHCTIVIIV. Topologically, residues 148 to 184 are extracellular; it reads QYLNSTEQVGTENQITCYENFTQEQLDVVLPVRLELC. Residues Asn-151 and Asn-167 are each glycosylated (N-linked (GlcNAc...) asparagine). The chain crosses the membrane as a helical span at residues 185–205; sequence LVLFFVPMAVTIFCYWRFVWI. Residues 206–219 are Cytoplasmic-facing; the sequence is MLTQPHVGAQRRRR. The chain crosses the membrane as a helical span at residues 220–240; sequence AVGLAVVTLLNFLVCFGPYNM. Topologically, residues 241–255 are extracellular; the sequence is SHLVGFYLRQSPSWR. The helical transmembrane segment at 256–276 threads the bilayer; that stretch reads VEAVVFSSLNASLDPLLFYFS. Residues 277–330 are Cytoplasmic-facing; that stretch reads SSVVRRAFGKGLLLIRNPASSMLGRGAKETVEGTKMDRGGSQAEGVQSSEFVTE. Positions 306–330 are disordered; it reads TVEGTKMDRGGSQAEGVQSSEFVTE. Residues 320–330 show a composition bias toward polar residues; that stretch reads EGVQSSEFVTE.

It belongs to the G-protein coupled receptor 1 family. In terms of assembly, interacts with FCN1 (via Fibrinogen C-terminal domain). As to expression, highly expressed in hematopoietic tissues, such as spleen and bone marrow, with highest levels in a subset of immune cells, including monocytes or neutrophils. Expressed in adipose tissues with high expression in differentiating adipocytes. Expressed by intestinal endocrine cells.

It is found in the cell membrane. Its function is as follows. G protein-coupled receptor that is activated by a major product of dietary fiber digestion, the short chain fatty acids (SCFAs), and that plays a role in the regulation of whole-body energy homeostasis and in intestinal immunity. In omnivorous mammals, the short chain fatty acids acetate, propionate and butyrate are produced primarily by the gut microbiome that metabolizes dietary fibers. SCFAs serve as a source of energy but also act as signaling molecules. That G protein-coupled receptor is probably coupled to the pertussis toxin-sensitive, G(i/o)-alpha family of G proteins but also to the Gq family. Its activation results in the formation of inositol 1,4,5-trisphosphate, the mobilization of intracellular calcium, the phosphorylation of the MAPK3/ERK1 and MAPK1/ERK2 kinases and the inhibition of intracellular cAMP accumulation. May play a role in glucose homeostasis by regulating the secretion of GLP-1, in response to short-chain fatty acids accumulating in the intestine. May also regulate the production of LEP/Leptin, a hormone acting on the central nervous system to inhibit food intake. Finally, may also regulate whole-body energy homeostasis through adipogenesis regulating both differentiation and lipid storage of adipocytes. In parallel to its role in energy homeostasis, may also mediate the activation of the inflammatory and immune responses by SCFA in the intestine, regulating the rapid production of chemokines and cytokines. May also play a role in the resolution of the inflammatory response and control chemotaxis in neutrophils. In addition to SCFAs, may also be activated by the extracellular lectin FCN1 in a process leading to activation of monocytes and inducing the secretion of interleukin-8/IL-8 in response to the presence of microbes. This Mus musculus (Mouse) protein is Free fatty acid receptor 2 (Ffar2).